Here is an 867-residue protein sequence, read N- to C-terminus: G-protein coupled receptor family C group 6 member A (867 aa).

The N-terminal stretch at Met1–Ala19 is a signal peptide. Over Ser20 to Ala566 the chain is Extracellular. Residues Asn51, Asn55, Asn97, Asn296, Asn308, Asn336, Asn356, Asn370, Asn527, and Asn547 are each glycosylated (N-linked (GlcNAc...) asparagine). A helical membrane pass occupies residues Ile567–Phe587. The Cytoplasmic segment spans residues Phe588–Pro602. A helical membrane pass occupies residues Leu603–Gly623. At Glu624–Gln634 the chain is on the extracellular side. A helical membrane pass occupies residues Val635–Ile655. Residues Leu656–Pro675 are Cytoplasmic-facing. A helical membrane pass occupies residues Tyr676–Leu696. Residues Tyr697–Glu716 are Extracellular-facing. A helical membrane pass occupies residues Gly717–Phe737. Residues Thr738 to Lys754 are Cytoplasmic-facing. A helical transmembrane segment spans residues Phe755 to Val775. Over Thr776–Tyr781 the chain is Extracellular. A helical membrane pass occupies residues Val782–Phe802. Topologically, residues Leu803–Glu867 are cytoplasmic.

It belongs to the G-protein coupled receptor 3 family. Homodimer; disulfide-linked.

The protein localises to the cell membrane. Olfactory receptor that is activated by amino acids that act as potent odorants in fish. Displays preference for acidic amino acids such as Glu over basic amino acids. The protein is G-protein coupled receptor family C group 6 member A (gprc6a) of Danio rerio (Zebrafish).